The primary structure comprises 448 residues: Glucose-6-phosphate isomerase (448 aa).

Residue Glu291 is the Proton donor of the active site. Active-site residues include His312 and Lys425.

It belongs to the GPI family.

The protein localises to the cytoplasm. The enzyme catalyses alpha-D-glucose 6-phosphate = beta-D-fructose 6-phosphate. Its pathway is carbohydrate biosynthesis; gluconeogenesis. It functions in the pathway carbohydrate degradation; glycolysis; D-glyceraldehyde 3-phosphate and glycerone phosphate from D-glucose: step 2/4. In terms of biological role, catalyzes the reversible isomerization of glucose-6-phosphate to fructose-6-phosphate. This is Glucose-6-phosphate isomerase from Symbiobacterium thermophilum (strain DSM 24528 / JCM 14929 / IAM 14863 / T).